Consider the following 218-residue polypeptide: Cytochrome b6 (218 aa).

Residues 35 to 55 (IFYCLGGITLVCFLIQFATGF) traverse the membrane as a helical segment. Heme c is bound at residue Cys38. Heme b contacts are provided by His89 and His103. 3 helical membrane passes run 93–113 (ASMM…TGGF), 119–139 (LTWI…VTGY), and 189–209 (LHTF…FLMI). Heme b contacts are provided by His190 and His205.

It belongs to the cytochrome b family. PetB subfamily. In terms of assembly, the 4 large subunits of the cytochrome b6-f complex are cytochrome b6, subunit IV (17 kDa polypeptide, PetD), cytochrome f and the Rieske protein, while the 4 small subunits are PetG, PetL, PetM and PetN. The complex functions as a dimer. The cofactor is heme b. Heme c is required as a cofactor.

The protein resides in the cellular thylakoid membrane. Functionally, component of the cytochrome b6-f complex, which mediates electron transfer between photosystem II (PSII) and photosystem I (PSI), cyclic electron flow around PSI, and state transitions. This is Cytochrome b6 from Prochlorococcus marinus (strain NATL1A).